The following is a 227-amino-acid chain: Chaperone protein FocC (227 aa).

The signal sequence occupies residues 1-21 (MRIWAVLASFLVFFYIPQSYA).

The protein belongs to the periplasmic pilus chaperone family.

The protein resides in the periplasm. Its function is as follows. Involved in the biogenesis of the F1C fimbriae. This Escherichia coli O6:H1 (strain CFT073 / ATCC 700928 / UPEC) protein is Chaperone protein FocC (focC).